The following is a 621-amino-acid chain: Chaperone protein dnaK (621 aa).

The segment at 597–621 is disordered; sequence VYSSTQQDNSKTEDGSVIDTNSKEA.

This sequence belongs to the heat shock protein 70 family.

Its subcellular location is the plastid. It localises to the chloroplast. Acts as a chaperone. The chain is Chaperone protein dnaK from Gracilaria tenuistipitata var. liui (Red alga).